The primary structure comprises 1081 residues: Serine/threonine-protein kinase PKH2 (1081 aa).

Residue S138 is modified to Phosphoserine. The 265-residue stretch at 179 to 443 folds into the Protein kinase domain; that stretch reads FKFGSVIGDG…ISQIKEHHFF (265 aa). Residues 189–191 and K208 each bind ATP; that span reads AYS. The PIF-pocket stretch occupies residues 210–255; it reads LNKEYLIRQKKVKYVSIEKTALQKLNNSPSVVRLFSTFQDESSLYF. ATP contacts are provided by residues 258-260 and D264; that span reads EYA. D303 serves as the catalytic Proton acceptor. ATP is bound by residues E307 and D321. Polar residues predominate over residues 494–526; it reads HLVTQRSASSPSVEETTHSTLYNNNTHASTESE. 3 disordered regions span residues 494–652, 805–833, and 970–1017; these read HLVT…TYQM, NRSGEGYKCNQNSSPMKDDDKSESNNKGS, and IERR…INSA. The span at 527-538 shows a compositional bias: basic and acidic residues; that stretch reads ISIKKRPTDERT. Low complexity-rich tracts occupy residues 564-575 and 582-602; these read AASAALAASAAL and SYPTSSSKSSRSSSPATTSRP. Phosphoserine is present on S619. The segment covering 632–645 has biased composition (pro residues); it reads PMPPYTPPMSPPMT. Polar residues-rich tracts occupy residues 805 to 819 and 998 to 1017; these read NRSGEGYKCNQNSSP and HSQSPSISKHNSFSESINSA. S1009 carries the post-translational modification Phosphoserine.

Belongs to the protein kinase superfamily. AGC Ser/Thr protein kinase family. PDPK1 subfamily.

Its subcellular location is the nucleus. The protein localises to the cytoplasm. It localises to the cell cortex. The catalysed reaction is L-seryl-[protein] + ATP = O-phospho-L-seryl-[protein] + ADP + H(+). The enzyme catalyses L-threonyl-[protein] + ATP = O-phospho-L-threonyl-[protein] + ADP + H(+). With respect to regulation, sphingoid base activates kinase activity. Serine/threonine-protein kinase which is part sphingolipid-mediated signaling pathway that is required for the internalization step of endocytosis by regulating eisosome assembly and organization, and modulating the organization of the plasma membrane. Phosphorylates and activates PKC1. Activates YPK1 and YPK2, 2 components of signaling cascade required for maintenance of cell wall integrity. Required for stress-induced P-body assembly and regulates global mRNA decay at the deadenylation step. This chain is Serine/threonine-protein kinase PKH2 (PKH2), found in Saccharomyces cerevisiae (strain ATCC 204508 / S288c) (Baker's yeast).